The following is a 144-amino-acid chain: Maximins 3/H5 (144 aa).

The signal sequence occupies residues 1–18 (MNFKYIFAVSFLIASAYA). 2 propeptides span residues 19 to 43 (RSVQ…REIR) and 74 to 123 (TAEE…KEKR). Leu143 is modified (leucine amide).

This sequence belongs to the bombinin family. In terms of tissue distribution, expressed by the skin glands.

The protein localises to the secreted. Its function is as follows. Maximin-3 shows antibacterial activity against both Gram-positive and Gram-negative bacteria. It also shows antimicrobial activity against the fungus C.albicans, but not against A.flavus nor P.uticale. It has little hemolytic activity. It possess a significant cytotoxicity against tumor cell lines. It possess a significant anti-HIV activity. It shows high spermicidal activity. Maximin-H5 shows antibacterial activity only against the Gram-positive bacteria S.aureus. The other bacterial and fungal strains tested were resistant to it. The presence of metal ions, like Zn(2+) and Mg(2+), did not increase its antimicrobial potency. Does not show hemolytic activity (in a concentration up to 80 uM). The polypeptide is Maximins 3/H5 (Bombina maxima (Giant fire-bellied toad)).